The primary structure comprises 139 residues: mRNA stability protein mug134 (139 aa).

The tract at residues 83–139 is disordered; that stretch reads IGKEIPSPDTIPHRVVSAGSPNKEPSLHTKRPSESSPSGASSRRESVTRHDLESNEN. Over residues 124–139 the composition is skewed to basic and acidic residues; it reads SRRESVTRHDLESNEN.

Belongs to the endosulfine family.

Its subcellular location is the nucleus. The protein localises to the cytoplasm. In terms of biological role, plays an essential role in initiation of the G0 program by preventing the degradation of specific nutrient-regulated mRNAs via the 5'-3' mRNA decay pathway. The sequence is that of mRNA stability protein mug134 (mug134) from Schizosaccharomyces pombe (strain 972 / ATCC 24843) (Fission yeast).